We begin with the raw amino-acid sequence, 283 residues long: Aquaporin PIP2-5 (283 aa).

A run of 2 helical transmembrane segments spans residues 37-57 (AVIA…ATVI) and 74-94 (CGGV…FILV). The NPA 1 motif lies at 106–108 (NPA). 3 helical membrane-spanning segments follow: residues 125–145 (ILYI…VKGF), 167–187 (GTGL…VFSA), and 199–219 (VPVL…LATI). The short motif at 227-229 (NPA) is the NPA 2 element. The chain crosses the membrane as a helical span at residues 249 to 269 (IFWVGPFIGAAIAALYHQIVL).

Belongs to the MIP/aquaporin (TC 1.A.8) family. PIP (TC 1.A.8.11) subfamily. In terms of tissue distribution, expressed in roots.

It localises to the cell membrane. Water channel required to facilitate the transport of water across cell membrane. May play a role in root water uptake. This Oryza sativa subsp. japonica (Rice) protein is Aquaporin PIP2-5 (PIP2-5).